A 345-amino-acid chain; its full sequence is Ketol-acid reductoisomerase (NADP(+)) (345 aa).

In terms of domain architecture, KARI N-terminal Rossmann spans 2–182 (AKVYHDSSAD…GTTRAGVLET (181 aa)). Residues 25–28 (YGSQ), arginine 48, serine 51, serine 53, and 83–86 (DTEQ) each bind NADP(+). Histidine 108 is an active-site residue. Residue glycine 134 participates in NADP(+) binding. Residues 183–328 (TFKEETETDL…AQLRDMMTFL (146 aa)) form the KARI C-terminal knotted domain. Mg(2+) contacts are provided by aspartate 191, glutamate 195, glutamate 227, and glutamate 231. Serine 252 is a binding site for substrate.

Belongs to the ketol-acid reductoisomerase family. The cofactor is Mg(2+).

It catalyses the reaction (2R)-2,3-dihydroxy-3-methylbutanoate + NADP(+) = (2S)-2-acetolactate + NADPH + H(+). The enzyme catalyses (2R,3R)-2,3-dihydroxy-3-methylpentanoate + NADP(+) = (S)-2-ethyl-2-hydroxy-3-oxobutanoate + NADPH + H(+). The protein operates within amino-acid biosynthesis; L-isoleucine biosynthesis; L-isoleucine from 2-oxobutanoate: step 2/4. It participates in amino-acid biosynthesis; L-valine biosynthesis; L-valine from pyruvate: step 2/4. Involved in the biosynthesis of branched-chain amino acids (BCAA). Catalyzes an alkyl-migration followed by a ketol-acid reduction of (S)-2-acetolactate (S2AL) to yield (R)-2,3-dihydroxy-isovalerate. In the isomerase reaction, S2AL is rearranged via a Mg-dependent methyl migration to produce 3-hydroxy-3-methyl-2-ketobutyrate (HMKB). In the reductase reaction, this 2-ketoacid undergoes a metal-dependent reduction by NADPH to yield (R)-2,3-dihydroxy-isovalerate. This Koribacter versatilis (strain Ellin345) protein is Ketol-acid reductoisomerase (NADP(+)).